The sequence spans 198 residues: Holliday junction branch migration complex subunit RuvA (198 aa).

Residues 1–63 (MYDYIKGQLT…EDAHLLFGFH (63 aa)) form a domain I region. The interval 64–142 (TEDEKDVFLK…EAPQETGHTK (79 aa)) is domain II. The flexible linker stretch occupies residues 143-147 (ARSNK). The segment at 148 to 198 (AGNTQLDEAIEALLALGYTATELKKIRAFFEGTSETAEQYIKSALKLLMKG) is domain III.

This sequence belongs to the RuvA family. In terms of assembly, homotetramer. Forms an RuvA(8)-RuvB(12)-Holliday junction (HJ) complex. HJ DNA is sandwiched between 2 RuvA tetramers; dsDNA enters through RuvA and exits via RuvB. An RuvB hexamer assembles on each DNA strand where it exits the tetramer. Each RuvB hexamer is contacted by two RuvA subunits (via domain III) on 2 adjacent RuvB subunits; this complex drives branch migration. In the full resolvosome a probable DNA-RuvA(4)-RuvB(12)-RuvC(2) complex forms which resolves the HJ.

It localises to the cytoplasm. The RuvA-RuvB-RuvC complex processes Holliday junction (HJ) DNA during genetic recombination and DNA repair, while the RuvA-RuvB complex plays an important role in the rescue of blocked DNA replication forks via replication fork reversal (RFR). RuvA specifically binds to HJ cruciform DNA, conferring on it an open structure. The RuvB hexamer acts as an ATP-dependent pump, pulling dsDNA into and through the RuvAB complex. HJ branch migration allows RuvC to scan DNA until it finds its consensus sequence, where it cleaves and resolves the cruciform DNA. The protein is Holliday junction branch migration complex subunit RuvA of Streptococcus pyogenes serotype M49 (strain NZ131).